The primary structure comprises 111 residues: MISDKIKLTAKDILEKEFKTGMRGYQQEEVDKFLDMIIKDYEAFHKEFEQLKQQNARLKRELEEQKLAATQVPQQPVQTPVAQPVYNNTNTDILKRLSNLEKAVFGSKLYE.

A coiled-coil region spans residues 38 to 72; it reads IKDYEAFHKEFEQLKQQNARLKRELEEQKLAATQV.

Belongs to the GpsB family. As to quaternary structure, forms polymers through the coiled coil domains. Interacts with PBP1, MreC and EzrA.

It is found in the cytoplasm. Divisome component that associates with the complex late in its assembly, after the Z-ring is formed, and is dependent on DivIC and PBP2B for its recruitment to the divisome. Together with EzrA, is a key component of the system that regulates PBP1 localization during cell cycle progression. Its main role could be the removal of PBP1 from the cell pole after pole maturation is completed. Also contributes to the recruitment of PBP1 to the division complex. Not essential for septum formation. In Bacillus cereus (strain ATCC 10987 / NRS 248), this protein is Cell cycle protein GpsB.